The chain runs to 66 residues: Hirudin-PA (66 aa).

Residues 1-3 (ITY) are interaction with thrombin active site. Disulfide bonds link Cys-6-Cys-14, Cys-16-Cys-28, and Cys-22-Cys-39. A disordered region spans residues 39–66 (CVTGEGTPKPQSHNQGDFEPIPEDAYDE). Thr-45 carries O-linked (GalNAc...) threonine glycosylation. Residues 55-66 (DFEPIPEDAYDE) form an interaction with fibrinogen-binding exosite of thrombin region. Tyr-64 carries the sulfotyrosine modification.

It belongs to the protease inhibitor I14 (hirudin) family.

The protein localises to the secreted. In terms of biological role, hirudin is a potent thrombin-specific protease inhibitor. It forms a stable non-covalent complex with alpha-thrombin, thereby abolishing its ability to cleave fibrinogen. This Hirudo medicinalis (Medicinal leech) protein is Hirudin-PA.